The sequence spans 101 residues: Phosphoribosyl-AMP cyclohydrolase (101 aa).

Residue Asp71 coordinates Mg(2+). Cys72 lines the Zn(2+) pocket. Mg(2+) is bound by residues Asp73 and Asp75. The Zn(2+) site is built by Cys88 and Cys95.

The protein belongs to the PRA-CH family. In terms of assembly, homodimer. Mg(2+) serves as cofactor. Zn(2+) is required as a cofactor.

The protein localises to the cytoplasm. It catalyses the reaction 1-(5-phospho-beta-D-ribosyl)-5'-AMP + H2O = 1-(5-phospho-beta-D-ribosyl)-5-[(5-phospho-beta-D-ribosylamino)methylideneamino]imidazole-4-carboxamide. The protein operates within amino-acid biosynthesis; L-histidine biosynthesis; L-histidine from 5-phospho-alpha-D-ribose 1-diphosphate: step 3/9. Its function is as follows. Catalyzes the hydrolysis of the adenine ring of phosphoribosyl-AMP. This Bacillus cereus (strain ZK / E33L) protein is Phosphoribosyl-AMP cyclohydrolase.